The chain runs to 504 residues: Protein nucleotidyltransferase YdiU (504 aa).

ATP contacts are provided by Gly99, Gly101, Arg102, Lys122, Asp134, Gly135, Arg185, and Arg192. Asp261 acts as the Proton acceptor in catalysis. Asn262 and Asp271 together coordinate Mg(2+). ATP is bound at residue Asp271.

The protein belongs to the SELO family. Mg(2+) serves as cofactor. It depends on Mn(2+) as a cofactor.

The enzyme catalyses L-seryl-[protein] + ATP = 3-O-(5'-adenylyl)-L-seryl-[protein] + diphosphate. It catalyses the reaction L-threonyl-[protein] + ATP = 3-O-(5'-adenylyl)-L-threonyl-[protein] + diphosphate. It carries out the reaction L-tyrosyl-[protein] + ATP = O-(5'-adenylyl)-L-tyrosyl-[protein] + diphosphate. The catalysed reaction is L-histidyl-[protein] + UTP = N(tele)-(5'-uridylyl)-L-histidyl-[protein] + diphosphate. The enzyme catalyses L-seryl-[protein] + UTP = O-(5'-uridylyl)-L-seryl-[protein] + diphosphate. It catalyses the reaction L-tyrosyl-[protein] + UTP = O-(5'-uridylyl)-L-tyrosyl-[protein] + diphosphate. In terms of biological role, nucleotidyltransferase involved in the post-translational modification of proteins. It can catalyze the addition of adenosine monophosphate (AMP) or uridine monophosphate (UMP) to a protein, resulting in modifications known as AMPylation and UMPylation. The chain is Protein nucleotidyltransferase YdiU from Methylococcus capsulatus (strain ATCC 33009 / NCIMB 11132 / Bath).